Consider the following 398-residue polypeptide: Lysophospholipid transporter LplT (398 aa).

12 consecutive transmembrane segments (helical) span residues 19 to 39, 53 to 73, 96 to 116, 139 to 159, 164 to 184, 195 to 213, 227 to 247, 257 to 277, 281 to 301, 304 to 324, 352 to 372, and 373 to 393; these read VIVAQFLSAFGDNALLFATLA, VLQMVFVGAYILFAPFVGQIA, ICLGVNPFVGYTLVGIGAAAY, LMEASTIAAILLGSVAGGVLA, IAALVACTLAYAGAVVANLFI, SWQLAAMIRSFFCACVVLW, LFWGAGVTLRFLVVLWVPVAL, YLNAMVAVGIVVGAGAAAKLV, TVSRCMPAGILIGVVVAMFSL, ALLPAYALLLLIGILGGFFVV, NSTMLLMLGLYSLAVMVGVPA, and VATGIGFGVLFALAIAALWIW.

Belongs to the major facilitator superfamily. LplT (TC 2.A.1.42) family.

It is found in the cell inner membrane. Its function is as follows. Catalyzes the facilitated diffusion of 2-acyl-glycero-3-phosphoethanolamine (2-acyl-GPE) into the cell. The protein is Lysophospholipid transporter LplT of Salmonella arizonae (strain ATCC BAA-731 / CDC346-86 / RSK2980).